A 644-amino-acid polypeptide reads, in one-letter code: Exoribonuclease 2 (644 aa).

Residues 189 to 516 form the RNB domain; sequence REDLTSLDFV…NHRLLKAVIK (328 aa). Residues 561–643 enclose the S1 motif domain; it reads GTRFAAEIVD…ETRSIIARPV (83 aa).

Belongs to the RNR ribonuclease family. RNase II subfamily.

Its subcellular location is the cytoplasm. It catalyses the reaction Exonucleolytic cleavage in the 3'- to 5'-direction to yield nucleoside 5'-phosphates.. Involved in mRNA degradation. Hydrolyzes single-stranded polyribonucleotides processively in the 3' to 5' direction. This Shigella flexneri serotype 5b (strain 8401) protein is Exoribonuclease 2.